The following is a 245-amino-acid chain: Carboxymethylenebutenolidase homolog (245 aa).

At A2 the chain carries N-acetylalanine. Residue K36 is modified to N6-acetyllysine. Residues C132, D179, and H212 contribute to the active site. Position 223 is a phosphoserine (S223).

It belongs to the dienelactone hydrolase family. Widely expressed, with highest levels in liver, followed by kidney, small intestine and colon. Present in liver and intestine (at protein level).

It is found in the cytoplasm. The protein resides in the cytosol. With respect to regulation, strongly inhibited by p-chloromercuribenzoate (PCMB). Partially inhibited by bis-p-nitrophenylphosphate (BNPP). Not inhibited by DFP, PMSF, eserine or EDTA. Functionally, cysteine hydrolase. Can convert the prodrug olmesartan medoxomil into its pharmacologically active metabolite olmerstatan, an angiotensin receptor blocker, in liver and intestine. May also activate beta-lactam antibiotics faropenem medoxomil and lenampicillin. This Homo sapiens (Human) protein is Carboxymethylenebutenolidase homolog (CMBL).